The following is a 744-amino-acid chain: Protein pthb1 homolog (744 aa).

Residues 722 to 733 show a composition bias toward basic and acidic residues; sequence EHSPKELPKIRE. The interval 722 to 744 is disordered; the sequence is EHSPKELPKIREEEEEEEQQVTA. A compositionally biased stretch (acidic residues) spans 734–744; the sequence is EEEEEEQQVTA.

As to quaternary structure, part of BBSome complex, that contains bbs-1, bbs-2, bbs-4, bbs-5, osm-12, bbs-8/ttc-8 and bbs-9. Interacts with bbs-1.

Functionally, component of the BBSome complex. The BBSome complex is thought to function as a coat complex required for sorting of specific membrane proteins to the primary cilia. The BBSome complex is required for ciliogenesis but is dispensable for centriolar satellite function. Required for proper BBSome complex assembly and its ciliary localization. Required for cilia biogenesis and both the assembly and movement of intraflagellar transport proteins along the ciliary axoneme. In ciliated sensory neurons, required for the sensation of nitric oxide and avoidance of NO-producing organisms like P.aeruginosa. This Caenorhabditis elegans protein is Protein pthb1 homolog.